The sequence spans 440 residues: Protein dumpy-20 (440 aa).

Positions 96 to 119 (ILSDPSLHGSNSSSSTSDVGSSVD) are disordered. Over residues 98 to 119 (SDPSLHGSNSSSSTSDVGSSVD) the composition is skewed to low complexity. 2 consecutive BED-type zinc fingers follow at residues 137 to 186 (PTEN…YQKV) and 350 to 399 (KTEH…YNDV). Zn(2+) is bound by residues Cys156, Cys159, His174, His179, Cys369, Cys372, His387, and His392.

May be directly or indirectly involved in cuticle function. The protein is Protein dumpy-20 (dpy-20) of Caenorhabditis elegans.